Reading from the N-terminus, the 944-residue chain is Leucine--tRNA ligase (944 aa).

The 'HIGH' region signature appears at 40–51; sequence PYPSGAGLHVGH. Residues 718 to 722 carry the 'KMSKS' region motif; sequence KMSKS. Lys721 contacts ATP.

It belongs to the class-I aminoacyl-tRNA synthetase family.

It localises to the cytoplasm. It catalyses the reaction tRNA(Leu) + L-leucine + ATP = L-leucyl-tRNA(Leu) + AMP + diphosphate. The polypeptide is Leucine--tRNA ligase (Bacteroides thetaiotaomicron (strain ATCC 29148 / DSM 2079 / JCM 5827 / CCUG 10774 / NCTC 10582 / VPI-5482 / E50)).